A 255-amino-acid chain; its full sequence is Ribonuclease HII (255 aa).

The 184-residue stretch at 72–255 folds into the RNase H type-2 domain; sequence AIICGIDEVG…KSFEPIKSLL (184 aa). The a divalent metal cation site is built by D78, E79, and D170.

This sequence belongs to the RNase HII family. Mn(2+) is required as a cofactor. Mg(2+) serves as cofactor.

The protein resides in the cytoplasm. It catalyses the reaction Endonucleolytic cleavage to 5'-phosphomonoester.. In terms of biological role, endonuclease that specifically degrades the RNA of RNA-DNA hybrids. The sequence is that of Ribonuclease HII from Staphylococcus aureus (strain USA300).